Reading from the N-terminus, the 304-residue chain is MGDSTKKAETAKDEGTSQERREARPLPTAADFEGKDTSENTDGRAADADGEMSLERRLDSLREFLRERRGAIRVTNPGLETGRPRLQLAENMRPDPTNPYNRPSIEALSRIKPIAISNNMATSEDMMRIYVNLEGLGVPTEHVQQVVIQAVLFCKDASSSVFLDPRGSFEWPRGAITADAVLAVLKKDAETLRRVCRLYAPVTWNHMLTHNAPPADWAAMGFQYEDRFAAFDCFDYVENTAAVQPLEGLIRRPTPREKVAHNTHKDIAVRGANRNQVFSSLNAEVTGGMNGPELTRDYVKSNRK.

Composition is skewed to basic and acidic residues over residues 1-24 and 32-54; these read MGDSTKKAETAKDEGTSQERREAR and FEGKDTSENTDGRAADADGEMSL. Residues 1–54 are disordered; sequence MGDSTKKAETAKDEGTSQERREARPLPTAADFEGKDTSENTDGRAADADGEMSL.

It belongs to the potexviruses coat protein family.

It is found in the virion. In terms of biological role, required for genome encapsidation. Forms ribonucleoprotein complexes along with TGB1 helicase and viral RNA. The chain is Capsid protein from Potato virus M (strain Russian) (PVM).